The chain runs to 194 residues: uncharacterized protein (194 aa).

This is an uncharacterized protein from Escherichia coli (strain K12).